A 360-amino-acid chain; its full sequence is Phospho-N-acetylmuramoyl-pentapeptide-transferase (360 aa).

Topologically, residues 1-25 (MLVWLAEHLVKYYSGFNVFSYLTFR) are periplasmic. Residues 26–46 (AIVSLLTALFISLWMGPRMIA) traverse the membrane as a helical segment. Residues 47 to 71 (RLQKLSFGQVVRNDGPESHFSKRGT) lie on the Cytoplasmic side of the membrane. The helical transmembrane segment at 72–92 (PTMGGIMILTAIVISVLLWAY) threads the bilayer. Pro93 is a topological domain (periplasmic). A helical membrane pass occupies residues 94 to 114 (SNPYVWCVLVVLIGYGIIGFV). Over 115 to 131 (DDYHKVVRKDTKGLIAR) the chain is Cytoplasmic. A helical transmembrane segment spans residues 132–152 (WKYFWMSVIALGVAFALYLVG). At 153 to 167 (KDTPATQLVVPFFKD) the chain is on the periplasmic side. A helical transmembrane segment spans residues 168 to 188 (VMPQLGLFYILLSYFVIVGTG). Residues 189–198 (NAVNLTDGLD) are Cytoplasmic-facing. The chain crosses the membrane as a helical span at residues 199–219 (GLAIMPTVFVAAGFALVAWAT). At 220-235 (GNMNFANYLHIPYLRY) the chain is on the periplasmic side. Residues 236–256 (AGELVIVCTAIVGAGLGFLWF) traverse the membrane as a helical segment. Residues 257 to 262 (NTYPAQ) lie on the Cytoplasmic side of the membrane. A helical membrane pass occupies residues 263-283 (VFMGDVGSLALGGALGIIAVL). Over 284-287 (LRQE) the chain is Periplasmic. The chain crosses the membrane as a helical span at residues 288-308 (FLLVIMGGVFVVETLSVILQV). The Cytoplasmic portion of the chain corresponds to 309–337 (GSFKLRGQRIFRMAPIHHHYELKGWPEPR). The helical transmembrane segment at 338-358 (VIVRFWIISLMLVLIGLATLK) threads the bilayer. Over 359–360 (VR) the chain is Periplasmic.

The protein belongs to the glycosyltransferase 4 family. MraY subfamily. Mg(2+) is required as a cofactor.

Its subcellular location is the cell inner membrane. The catalysed reaction is UDP-N-acetyl-alpha-D-muramoyl-L-alanyl-gamma-D-glutamyl-meso-2,6-diaminopimeloyl-D-alanyl-D-alanine + di-trans,octa-cis-undecaprenyl phosphate = di-trans,octa-cis-undecaprenyl diphospho-N-acetyl-alpha-D-muramoyl-L-alanyl-D-glutamyl-meso-2,6-diaminopimeloyl-D-alanyl-D-alanine + UMP. Its pathway is cell wall biogenesis; peptidoglycan biosynthesis. Catalyzes the initial step of the lipid cycle reactions in the biosynthesis of the cell wall peptidoglycan: transfers peptidoglycan precursor phospho-MurNAc-pentapeptide from UDP-MurNAc-pentapeptide onto the lipid carrier undecaprenyl phosphate, yielding undecaprenyl-pyrophosphoryl-MurNAc-pentapeptide, known as lipid I. The polypeptide is Phospho-N-acetylmuramoyl-pentapeptide-transferase (Salmonella paratyphi A (strain ATCC 9150 / SARB42)).